A 470-amino-acid polypeptide reads, in one-letter code: Glutamyl-tRNA(Gln) amidotransferase subunit A (470 aa).

Catalysis depends on charge relay system residues K71 and S146. S170 functions as the Acyl-ester intermediate in the catalytic mechanism.

This sequence belongs to the amidase family. GatA subfamily. In terms of assembly, heterotrimer of A, B and C subunits.

It carries out the reaction L-glutamyl-tRNA(Gln) + L-glutamine + ATP + H2O = L-glutaminyl-tRNA(Gln) + L-glutamate + ADP + phosphate + H(+). Allows the formation of correctly charged Gln-tRNA(Gln) through the transamidation of misacylated Glu-tRNA(Gln) in organisms which lack glutaminyl-tRNA synthetase. The reaction takes place in the presence of glutamine and ATP through an activated gamma-phospho-Glu-tRNA(Gln). The sequence is that of Glutamyl-tRNA(Gln) amidotransferase subunit A from Akkermansia muciniphila (strain ATCC BAA-835 / DSM 22959 / JCM 33894 / BCRC 81048 / CCUG 64013 / CIP 107961 / Muc).